The primary structure comprises 182 residues: ATP synthase subunit delta (182 aa).

This sequence belongs to the ATPase delta chain family. As to quaternary structure, F-type ATPases have 2 components, F(1) - the catalytic core - and F(0) - the membrane proton channel. F(1) has five subunits: alpha(3), beta(3), gamma(1), delta(1), epsilon(1). F(0) has three main subunits: a(1), b(2) and c(10-14). The alpha and beta chains form an alternating ring which encloses part of the gamma chain. F(1) is attached to F(0) by a central stalk formed by the gamma and epsilon chains, while a peripheral stalk is formed by the delta and b chains.

The protein localises to the cell membrane. F(1)F(0) ATP synthase produces ATP from ADP in the presence of a proton or sodium gradient. F-type ATPases consist of two structural domains, F(1) containing the extramembraneous catalytic core and F(0) containing the membrane proton channel, linked together by a central stalk and a peripheral stalk. During catalysis, ATP synthesis in the catalytic domain of F(1) is coupled via a rotary mechanism of the central stalk subunits to proton translocation. Its function is as follows. This protein is part of the stalk that links CF(0) to CF(1). It either transmits conformational changes from CF(0) to CF(1) or is implicated in proton conduction. The sequence is that of ATP synthase subunit delta from Alkalihalophilus pseudofirmus (strain ATCC BAA-2126 / JCM 17055 / OF4) (Bacillus pseudofirmus).